The sequence spans 496 residues: Lysine--tRNA ligase (496 aa).

Mg(2+) contacts are provided by glutamate 409 and glutamate 416.

Belongs to the class-II aminoacyl-tRNA synthetase family. Homodimer. Mg(2+) serves as cofactor.

It is found in the cytoplasm. It carries out the reaction tRNA(Lys) + L-lysine + ATP = L-lysyl-tRNA(Lys) + AMP + diphosphate. The sequence is that of Lysine--tRNA ligase from Streptococcus thermophilus (strain ATCC BAA-491 / LMD-9).